The primary structure comprises 320 residues: Acyl-coenzyme A thioesterase 8 (320 aa).

Active-site charge relay system residues include Asp-233, Ser-255, and Gln-305. The short motif at 318–320 (SKL) is the Microbody targeting signal element.

This sequence belongs to the C/M/P thioester hydrolase family. As to quaternary structure, homodimer.

It is found in the peroxisome matrix. It carries out the reaction choloyl-CoA + H2O = cholate + CoA + H(+). The enzyme catalyses chenodeoxycholoyl-CoA + H2O = chenodeoxycholate + CoA + H(+). The catalysed reaction is acetyl-CoA + H2O = acetate + CoA + H(+). It catalyses the reaction butanoyl-CoA + H2O = butanoate + CoA + H(+). It carries out the reaction hexanoyl-CoA + H2O = hexanoate + CoA + H(+). The enzyme catalyses octanoyl-CoA + H2O = octanoate + CoA + H(+). The catalysed reaction is decanoyl-CoA + H2O = decanoate + CoA + H(+). It catalyses the reaction dodecanoyl-CoA + H2O = dodecanoate + CoA + H(+). It carries out the reaction tetradecanoyl-CoA + H2O = tetradecanoate + CoA + H(+). The enzyme catalyses 4,8-dimethylnonanoyl-CoA + H2O = 4,8-dimethylnonanoate + CoA + H(+). The catalysed reaction is 2,6-dimethylheptanoyl-CoA + H2O = 2,6-dimethylheptanoate + CoA + H(+). It catalyses the reaction malonyl-CoA + H2O = malonate + CoA + H(+). It carries out the reaction acetoacetyl-CoA + H2O = acetoacetate + CoA + H(+). The enzyme catalyses propanoyl-CoA + H2O = propanoate + CoA + H(+). The catalysed reaction is succinyl-CoA + H2O = succinate + CoA + H(+). It catalyses the reaction glutaryl-CoA + H2O = glutarate + CoA + H(+). It carries out the reaction hexanedioyl-CoA + H2O = hexanedioate + CoA + H(+). The enzyme catalyses octanedioyl-CoA + H2O = octanedioate + CoA + H(+). The catalysed reaction is decanedioyl-CoA + H2O = decanedioate + CoA + H(+). It catalyses the reaction dodecanedioyl-CoA + H2O = dodecanedioate + CoA + H(+). It carries out the reaction (9Z)-tetradecenoyl-CoA + H2O = (9Z)-tetradecenoate + CoA + H(+). The enzyme catalyses hexadecanoyl-CoA + H2O = hexadecanoate + CoA + H(+). The catalysed reaction is (9Z)-hexadecenoyl-CoA + H2O = (9Z)-hexadecenoate + CoA + H(+). It catalyses the reaction octadecanoyl-CoA + H2O = octadecanoate + CoA + H(+). It carries out the reaction (9Z)-octadecenoyl-CoA + H2O = (9Z)-octadecenoate + CoA + H(+). The enzyme catalyses (9Z,12Z)-octadecadienoyl-CoA + H2O = (9Z,12Z)-octadecadienoate + CoA + H(+). The catalysed reaction is eicosanoyl-CoA + H2O = eicosanoate + CoA + H(+). It catalyses the reaction (5Z,8Z,11Z,14Z)-eicosatetraenoyl-CoA + H2O = (5Z,8Z,11Z,14Z)-eicosatetraenoate + CoA + H(+). It carries out the reaction (3S)-3-hydroxy-3-methylglutaryl-CoA + H2O = 3-hydroxy-3-methylglutarate + CoA + H(+). The enzyme catalyses 3alpha,7alpha,12alpha-trihydroxy-5beta-cholestan-26-oyl-CoA + H2O = 3alpha,7alpha,12alpha-trihydroxy-5beta-cholestan-26-oate + CoA + H(+). The catalysed reaction is 2-methyloctadecanoyl-CoA + H2O = 2-methyloctadecanoate + CoA + H(+). It catalyses the reaction prostaglandin F2alpha-CoA + H2O = prostaglandin F2alpha + CoA + H(+). Its activity is regulated as follows. Inhibited by CoASH (IC(50)=10-15 uM). Also inhibited by cysteine-reactive agents. Its function is as follows. Catalyzes the hydrolysis of acyl-CoAs into free fatty acids and coenzyme A (CoASH), regulating their respective intracellular levels. Displays no strong substrate specificity with respect to the carboxylic acid moiety of Acyl-CoAs. Hydrolyzes medium length (C2 to C20) straight-chain, saturated and unsaturated acyl-CoAS but is inactive towards substrates with longer aliphatic chains. Moreover, it catalyzes the hydrolysis of CoA esters of bile acids, such as choloyl-CoA and chenodeoxycholoyl-CoA and competes with bile acid CoA:amino acid N-acyltransferase (BAAT). Is also able to hydrolyze CoA esters of dicarboxylic acids. It is involved in the metabolic regulation of peroxisome proliferation. The polypeptide is Acyl-coenzyme A thioesterase 8 (Acot8) (Rattus norvegicus (Rat)).